The following is a 218-amino-acid chain: Octanoyltransferase (218 aa).

In terms of domain architecture, BPL/LPL catalytic spans 32–211 (INTYDEIWFL…KLSQLLNVSI (180 aa)). Substrate contacts are provided by residues 75–82 (RGGQITYH), 142–144 (SLG), and 155–157 (GLS). Cysteine 173 serves as the catalytic Acyl-thioester intermediate.

The protein belongs to the LipB family.

It is found in the cytoplasm. It carries out the reaction octanoyl-[ACP] + L-lysyl-[protein] = N(6)-octanoyl-L-lysyl-[protein] + holo-[ACP] + H(+). It participates in protein modification; protein lipoylation via endogenous pathway; protein N(6)-(lipoyl)lysine from octanoyl-[acyl-carrier-protein]: step 1/2. Its function is as follows. Catalyzes the transfer of endogenously produced octanoic acid from octanoyl-acyl-carrier-protein onto the lipoyl domains of lipoate-dependent enzymes. Lipoyl-ACP can also act as a substrate although octanoyl-ACP is likely to be the physiological substrate. This is Octanoyltransferase from Buchnera aphidicola subsp. Schizaphis graminum (strain Sg).